Consider the following 87-residue polypeptide: Small ribosomal subunit protein uS17 (87 aa).

It belongs to the universal ribosomal protein uS17 family. In terms of assembly, part of the 30S ribosomal subunit.

In terms of biological role, one of the primary rRNA binding proteins, it binds specifically to the 5'-end of 16S ribosomal RNA. The protein is Small ribosomal subunit protein uS17 of Staphylococcus aureus (strain JH1).